A 193-amino-acid polypeptide reads, in one-letter code: ATP-dependent Clp protease proteolytic subunit (193 aa).

Ser-98 acts as the Nucleophile in catalysis. The active site involves His-123.

This sequence belongs to the peptidase S14 family. Fourteen ClpP subunits assemble into 2 heptameric rings which stack back to back to give a disk-like structure with a central cavity, resembling the structure of eukaryotic proteasomes.

Its subcellular location is the cytoplasm. The enzyme catalyses Hydrolysis of proteins to small peptides in the presence of ATP and magnesium. alpha-casein is the usual test substrate. In the absence of ATP, only oligopeptides shorter than five residues are hydrolyzed (such as succinyl-Leu-Tyr-|-NHMec, and Leu-Tyr-Leu-|-Tyr-Trp, in which cleavage of the -Tyr-|-Leu- and -Tyr-|-Trp bonds also occurs).. In terms of biological role, cleaves peptides in various proteins in a process that requires ATP hydrolysis. Has a chymotrypsin-like activity. Plays a major role in the degradation of misfolded proteins. This Pasteurella multocida (strain Pm70) protein is ATP-dependent Clp protease proteolytic subunit.